Consider the following 426-residue polypeptide: Selenocysteine lyase (426 aa).

An N6-(pyridoxal phosphate)lysine modification is found at Lys239. Cys367 acts as the S-selanylcysteine intermediate in catalysis.

The protein belongs to the class-V pyridoxal-phosphate-dependent aminotransferase family. In terms of assembly, homodimer. Pyridoxal 5'-phosphate is required as a cofactor.

The protein resides in the cytoplasm. The protein localises to the cytosol. It catalyses the reaction L-selenocysteine + AH2 = hydrogenselenide + L-alanine + A + H(+). Catalyzes the decomposition of L-selenocysteine to L-alanine and elemental selenium. The polypeptide is Selenocysteine lyase (scly) (Xenopus laevis (African clawed frog)).